The sequence spans 162 residues: Sorting nexin-12 (162 aa).

Positions 1–20 (MSDTAVADTRRLNSKPQDLT) are disordered. Ser2 carries the post-translational modification N-acetylserine. At Tyr23 the chain carries Phosphotyrosine. Positions 28–152 (NFLEIDIFNP…HMFLQEEAID (125 aa)) constitute a PX domain. Arg71, Ser73, Lys96, and Arg119 together coordinate a 1,2-diacyl-sn-glycero-3-phospho-(1D-myo-inositol-3-phosphate). Ser73 is modified (phosphoserine).

Belongs to the sorting nexin family.

Its subcellular location is the membrane. Its function is as follows. May be involved in several stages of intracellular trafficking. This Homo sapiens (Human) protein is Sorting nexin-12 (SNX12).